Reading from the N-terminus, the 249-residue chain is 5'-nucleotidase SurE (249 aa).

Residues aspartate 8, aspartate 9, serine 39, and asparagine 91 each contribute to the a divalent metal cation site.

This sequence belongs to the SurE nucleotidase family. A divalent metal cation is required as a cofactor.

The protein localises to the cytoplasm. The enzyme catalyses a ribonucleoside 5'-phosphate + H2O = a ribonucleoside + phosphate. In terms of biological role, nucleotidase that shows phosphatase activity on nucleoside 5'-monophosphates. The sequence is that of 5'-nucleotidase SurE from Pseudomonas aeruginosa (strain UCBPP-PA14).